We begin with the raw amino-acid sequence, 341 residues long: UDP-glucose 4-epimerase (341 aa).

It belongs to the polysaccharide synthase family.

It carries out the reaction UDP-alpha-D-glucose = UDP-alpha-D-galactose. Functionally, epimerizes UDP-galactose to UDP-glucose. The protein is UDP-glucose 4-epimerase (capD) of Rickettsia canadensis (strain McKiel).